We begin with the raw amino-acid sequence, 415 residues long: Serine hydroxymethyltransferase 1 (415 aa).

(6S)-5,6,7,8-tetrahydrofolate-binding positions include leucine 122 and 126–128 (GHL). Position 230 is an N6-(pyridoxal phosphate)lysine (lysine 230).

It belongs to the SHMT family. As to quaternary structure, homodimer. It depends on pyridoxal 5'-phosphate as a cofactor.

The protein resides in the cytoplasm. It catalyses the reaction (6R)-5,10-methylene-5,6,7,8-tetrahydrofolate + glycine + H2O = (6S)-5,6,7,8-tetrahydrofolate + L-serine. It functions in the pathway one-carbon metabolism; tetrahydrofolate interconversion. It participates in amino-acid biosynthesis; glycine biosynthesis; glycine from L-serine: step 1/1. Catalyzes the reversible interconversion of serine and glycine with tetrahydrofolate (THF) serving as the one-carbon carrier. This reaction serves as the major source of one-carbon groups required for the biosynthesis of purines, thymidylate, methionine, and other important biomolecules. Also exhibits THF-independent aldolase activity toward beta-hydroxyamino acids, producing glycine and aldehydes, via a retro-aldol mechanism. This is Serine hydroxymethyltransferase 1 from Cupriavidus pinatubonensis (strain JMP 134 / LMG 1197) (Cupriavidus necator (strain JMP 134)).